Reading from the N-terminus, the 368-residue chain is Nicotinamide/nicotinic acid mononucleotide adenylyltransferase (368 aa).

Over residues 1–14 (MHTMNGDNFANSFP) the composition is skewed to polar residues. A disordered region spans residues 1–25 (MHTMNGDNFANSFPKNPLLSRNSSS). Position 36 is a phosphoserine (Ser-36). Residues 47–78 (AKEHEERIRRPSVNRAWQKNSTSGGPSVSLEK) are disordered. Residues 61–72 (RAWQKNSTSGGP) are compositionally biased toward polar residues. Phosphoserine occurs at positions 75 and 85. Residues Ser-135 and Phe-136 each contribute to the NAD(+) site. Position 143 (His-143) interacts with ATP. 6 residues coordinate NAD(+): Thr-215, Gly-250, Asp-252, Trp-263, Arg-282, and Asn-313. Position 318–321 (318–321 (TKVR)) interacts with ATP.

The protein belongs to the eukaryotic NMN adenylyltransferase family. A divalent metal cation is required as a cofactor.

The protein resides in the cytoplasm. It localises to the nucleus. The catalysed reaction is beta-nicotinamide D-ribonucleotide + ATP + H(+) = diphosphate + NAD(+). It catalyses the reaction nicotinate beta-D-ribonucleotide + ATP + H(+) = deamido-NAD(+) + diphosphate. Its pathway is cofactor biosynthesis; NAD(+) biosynthesis; deamido-NAD(+) from nicotinate D-ribonucleotide: step 1/1. It functions in the pathway cofactor biosynthesis; NAD(+) biosynthesis; NAD(+) from nicotinamide D-ribonucleotide: step 1/1. Its function is as follows. Catalyzes the formation of NAD(+) from nicotinamide mononucleotide (NMN) and ATP. Can also use the deamidated form; nicotinic acid mononucleotide (NaMN) as substrate to form deamido-NAD(+) (NaAD). Key enzyme in both de novo and salvage pathways for NAD(+) biosynthesis. This Schizosaccharomyces pombe (strain 972 / ATCC 24843) (Fission yeast) protein is Nicotinamide/nicotinic acid mononucleotide adenylyltransferase.